The primary structure comprises 327 residues: Zinc transport protein ZntB (327 aa).

The Cytoplasmic segment spans residues 1–271 (MESFAGKELQ…AMNRRTYTMS (271 aa)). A helical transmembrane segment spans residues 272-292 (LLAMVFLPTTFLTGLFGVNLG). Topologically, residues 293-300 (GIPGGDAP) are periplasmic. A helical membrane pass occupies residues 301 to 321 (FGFFTFCLMLVILVGGVAWWL). The Cytoplasmic portion of the chain corresponds to 322 to 327 (KRSKWL).

The protein belongs to the CorA metal ion transporter (MIT) (TC 1.A.35) family.

Its subcellular location is the cell inner membrane. It catalyses the reaction Zn(2+)(out) + H(+)(out) = Zn(2+)(in) + H(+)(in). Zinc transporter. Acts as a Zn(2+):proton symporter, which likely mediates zinc ion uptake. In Pectobacterium atrosepticum (strain SCRI 1043 / ATCC BAA-672) (Erwinia carotovora subsp. atroseptica), this protein is Zinc transport protein ZntB.